The primary structure comprises 1969 residues: Myosin-3 (1969 aa).

Residues aspartate 33–proline 82 enclose the Myosin N-terminal SH3-like domain. Residues aspartate 86–aspartate 791 form the Myosin motor domain. The residue at position 130 (lysine 130) is an N6,N6,N6-trimethyllysine. Glycine 179–threonine 186 serves as a coordination point for ATP. 2 actin-binding regions span residues leucine 667–glutamate 689 and lysine 770–alanine 784. Residues leucine 794–glycine 823 enclose the IQ domain. Positions lysine 857 to leucine 1969 form a coiled coil. 4 disordered regions span residues methionine 942–histidine 966, asparagine 1006–lysine 1029, leucine 1131–valine 1213, and lysine 1234–arginine 1255. 2 stretches are compositionally biased toward basic and acidic residues: residues alanine 1137–glutamate 1164 and alanine 1176–asparagine 1197.

It belongs to the TRAFAC class myosin-kinesin ATPase superfamily. Myosin family. Muscle myosin is a hexameric protein that consists of 2 heavy chain subunits (MHC), 2 alkali light chain subunits (MLC) and 2 regulatory light chain subunits (MLC-2). Expressed in body wall muscles, neighboring vulval muscle cells and the contractile sheath covering the hermaphrodite gonad (myoepithelial sheath cells).

Its subcellular location is the cytoplasm. It is found in the myofibril. The protein localises to the sarcomere. It localises to the a band. In terms of biological role, essential for muscle contraction. Involved in ovulation likely by regulating the contraction of gonadal myoepithelial sheath cells. The protein is Myosin-3 (myo-3) of Caenorhabditis elegans.